Consider the following 139-residue polypeptide: D-ribose pyranase (139 aa).

H20 serves as the catalytic Proton donor. Residues D28, H106, and 128 to 130 each bind substrate; that span reads FAN.

It belongs to the RbsD / FucU family. RbsD subfamily. Homodecamer.

It is found in the cytoplasm. The catalysed reaction is beta-D-ribopyranose = beta-D-ribofuranose. Its pathway is carbohydrate metabolism; D-ribose degradation; D-ribose 5-phosphate from beta-D-ribopyranose: step 1/2. Catalyzes the interconversion of beta-pyran and beta-furan forms of D-ribose. The sequence is that of D-ribose pyranase from Yersinia enterocolitica serotype O:8 / biotype 1B (strain NCTC 13174 / 8081).